We begin with the raw amino-acid sequence, 187 residues long: Coiled-coil domain-containing protein 201 (187 aa).

Disordered regions lie at residues 1–79 (MEPG…PPAT) and 92–159 (KESS…RAAA). A coiled-coil region spans residues 111 to 131 (LTQRQRQRQQQQQQQESLRAK). Basic residues predominate over residues 147–157 (GRKRRDPKKRA).

The polypeptide is Coiled-coil domain-containing protein 201 (Homo sapiens (Human)).